Consider the following 142-residue polypeptide: DNA polymerase III subunit chi (142 aa).

The protein belongs to the DNA polymerase III chi/HolC chain family. As to quaternary structure, DNA polymerase III contains a core (composed of alpha, epsilon and theta chains) that associates with a tau subunit. This core dimerizes to form the POLIII' complex. PolIII' associates with the gamma complex (composed of gamma, delta, delta', psi and chi chains) and with the beta chain to form the complete DNA polymerase III complex. Interacts directly with the psi subunit (holD). The only subunit of the DNA polymerase III holoenzyme known to interact with single-stranded DNA binding protein (SSB).

The catalysed reaction is DNA(n) + a 2'-deoxyribonucleoside 5'-triphosphate = DNA(n+1) + diphosphate. Its function is as follows. Part of the beta sliding clamp loading complex, which hydrolyzes ATP to load the beta clamp onto primed DNA to form the DNA replication pre-initiation complex. DNA polymerase III is a complex, multichain enzyme responsible for most of the replicative synthesis in bacteria. This DNA polymerase also exhibits 3' to 5' exonuclease activity. The polypeptide is DNA polymerase III subunit chi (Pseudomonas aeruginosa (strain ATCC 15692 / DSM 22644 / CIP 104116 / JCM 14847 / LMG 12228 / 1C / PRS 101 / PAO1)).